A 24-amino-acid chain; its full sequence is Frenatin-4 (24 aa).

As to expression, expressed by the skin glands.

The protein localises to the secreted. Functionally, very weak antimicrobial peptide since it does not show activity below 100 ug/ml against Bacillus cereus, Escherichia coli, Leuconostoc mesenteroides, Micrococcus luteus, Pastewella haemolytica, Staphylococcus aureus, Streptococcus faecalis and Streptococcus uberis. The protein is Frenatin-4 of Nyctimystes infrafrenatus (White-lipped tree frog).